The chain runs to 521 residues: GMP synthase [glutamine-hydrolyzing] (521 aa).

A Glutamine amidotransferase type-1 domain is found at 5-197 (KILILDFGSQ…VLDICGAQPG (193 aa)). Cys-81 functions as the Nucleophile in the catalytic mechanism. Active-site residues include His-171 and Glu-173. The GMPS ATP-PPase domain maps to 198-390 (WTMPNYIEEA…LGLPREMVYR (193 aa)). 225-231 (SGGVDSS) serves as a coordination point for ATP.

As to quaternary structure, homodimer.

The catalysed reaction is XMP + L-glutamine + ATP + H2O = GMP + L-glutamate + AMP + diphosphate + 2 H(+). It participates in purine metabolism; GMP biosynthesis; GMP from XMP (L-Gln route): step 1/1. Catalyzes the synthesis of GMP from XMP. This is GMP synthase [glutamine-hydrolyzing] (guaA) from Neisseria meningitidis serogroup B (strain ATCC BAA-335 / MC58).